The sequence spans 320 residues: Probable arabinan endo-1,5-alpha-L-arabinosidase C (320 aa).

An N-terminal signal peptide occupies residues 1–16; the sequence is MYRSTLLFLFIALVNA. Asp-31 (proton acceptor) is an active-site residue. Residues Asn-73, Asn-137, and Asn-191 are each glycosylated (N-linked (GlcNAc...) asparagine). Glu-199 (proton donor) is an active-site residue.

The protein belongs to the glycosyl hydrolase 43 family.

It localises to the secreted. It catalyses the reaction Endohydrolysis of (1-&gt;5)-alpha-arabinofuranosidic linkages in (1-&gt;5)-arabinans.. The protein operates within glycan metabolism; L-arabinan degradation. Endo-1,5-alpha-L-arabinanase involved in degradation of pectin. Its preferred substrate is linear 1,5-alpha-L-arabinan. The polypeptide is Probable arabinan endo-1,5-alpha-L-arabinosidase C (abnC) (Aspergillus terreus (strain NIH 2624 / FGSC A1156)).